We begin with the raw amino-acid sequence, 91 residues long: Large ribosomal subunit protein bL28 (91 aa).

The segment at 1–23 (MSRVCELTGKGPMSGNNVSHANN) is disordered.

It belongs to the bacterial ribosomal protein bL28 family.

This Paracoccus denitrificans (strain Pd 1222) protein is Large ribosomal subunit protein bL28.